A 328-amino-acid chain; its full sequence is dITP/XTP pyrophosphatase (328 aa).

The tract at residues 1–129 (MSEKIYEYKD…ATSEQGFGDI (129 aa)) is unknown. The interval 130–324 (ILIATRNEGK…KLMEVFPAWQ (195 aa)) is NTP pyrophosphatase. 134–139 (TRNEGK) contacts substrate. Asp-196 acts as the Proton acceptor in catalysis. Asp-196 is a binding site for Mg(2+). Residues Ser-197, 280–283 (FGYD), Lys-303, and 308–309 (HR) contribute to the substrate site.

It belongs to the HAM1 NTPase family. Homodimer. It depends on Mg(2+) as a cofactor.

The catalysed reaction is XTP + H2O = XMP + diphosphate + H(+). It carries out the reaction dITP + H2O = dIMP + diphosphate + H(+). The enzyme catalyses ITP + H2O = IMP + diphosphate + H(+). Pyrophosphatase that catalyzes the hydrolysis of nucleoside triphosphates to their monophosphate derivatives, with a high preference for the non-canonical purine nucleotides XTP (xanthosine triphosphate), dITP (deoxyinosine triphosphate) and ITP. Seems to function as a house-cleaning enzyme that removes non-canonical purine nucleotides from the nucleotide pool, thus preventing their incorporation into DNA/RNA and avoiding chromosomal lesions. The sequence is that of dITP/XTP pyrophosphatase from Streptococcus pyogenes serotype M1.